The following is a 325-amino-acid chain: GMP reductase (325 aa).

Cys173 functions as the Thioimidate intermediate in the catalytic mechanism. NADP(+) is bound at residue 202–225 (IIADGGIRHHGDIAKSVRFGAAMV).

The protein belongs to the IMPDH/GMPR family. GuaC type 2 subfamily.

The enzyme catalyses IMP + NH4(+) + NADP(+) = GMP + NADPH + 2 H(+). In terms of biological role, catalyzes the irreversible NADPH-dependent deamination of GMP to IMP. It functions in the conversion of nucleobase, nucleoside and nucleotide derivatives of G to A nucleotides, and in maintaining the intracellular balance of A and G nucleotides. This chain is GMP reductase, found in Leptothrix cholodnii (strain ATCC 51168 / LMG 8142 / SP-6) (Leptothrix discophora (strain SP-6)).